Reading from the N-terminus, the 374-residue chain is Putative zinc metalloprotease R01501 (374 aa).

Histidine 26 contacts Zn(2+). Residue glutamate 27 is part of the active site. Zn(2+) is bound at residue histidine 30. 4 consecutive transmembrane segments (helical) span residues 36-55 (WSGIRILAFSVGFGPELFGW), 112-134 (AATVAAGPIANFLLAIAIFAVLF), 301-323 (VLNFAAVLSVSIGLLNLMPVPVL), and 348-367 (LAFRIGFAMVLMLTVFAAWN). Positions 126 to 199 (AIAIFAVLFS…LPITVRIERE (74 aa)) constitute a PDZ domain.

The protein belongs to the peptidase M50B family. It depends on Zn(2+) as a cofactor.

It is found in the cell inner membrane. The sequence is that of Putative zinc metalloprotease R01501 from Rhizobium meliloti (strain 1021) (Ensifer meliloti).